The sequence spans 520 residues: Retinoic acid receptor RXR-beta (520 aa).

The segment at 1 to 167 (MSWATRPPFL…GGSGPPEDVK (167 aa)) is disordered. Residues 1-191 (MSWATRPPFL…PGGPGAGKRL (191 aa)) form a modulating region. At R25 the chain carries Omega-N-methylarginine. Over residues 64–79 (EAGRDGMGDSGRDSRS) the composition is skewed to basic and acidic residues. Over residues 95–118 (SSPPGPPLTPSAPPPPMPPPPLGS) the composition is skewed to pro residues. The segment covering 119 to 130 (PFPVISSSMGSP) has biased composition (low complexity). Over residues 131 to 140 (GLPPPAPPGF) the composition is skewed to pro residues. 2 NR C4-type zinc fingers span residues 192 to 212 (CAIC…CEGC) and 228 to 252 (CRDN…YQKC). Residues 192–257 (CAICGDRSSG…RYQKCLATGM (66 aa)) constitute a DNA-binding region (nuclear receptor). The tract at residues 258–382 (KREAVQEERQ…HRSIDVRDGI (125 aa)) is hinge. Residues 263–275 (QEERQRGKDKDGD) show a composition bias toward basic and acidic residues. Disordered stretches follow at residues 263 to 285 (QEER…APEE) and 300 to 323 (QKSD…NDPV). An NR LBD domain is found at 283–516 (PEEMPVDRIL…TFLMEMLEAP (234 aa)). Over residues 307–317 (EGPGATGGGGS) the composition is skewed to gly residues.

This sequence belongs to the nuclear hormone receptor family. NR2 subfamily. As to quaternary structure, homodimer (in vitro). Heterodimer with other retinoic acid receptor family members. Binds DNA preferentially as a RAR/RXR heterodimer. Interacts with NR1H3. Interacts with AKAP13. As to expression, in all tissues tested, including brain, thymus, spleen and liver.

It is found in the nucleus. The protein localises to the cytoplasm. Receptor for retinoic acid. Retinoic acid receptors bind as heterodimers to their target response elements in response to their ligands, all-trans or 9-cis retinoic acid, and regulate gene expression in various biological processes. The RAR/RXR heterodimers bind to the retinoic acid response elements (RARE). The chain is Retinoic acid receptor RXR-beta (Rxrb) from Mus musculus (Mouse).